The following is a 469-amino-acid chain: UDP-N-acetylmuramate--L-alanine ligase (469 aa).

113–119 (GSHGKTT) contacts ATP.

The protein belongs to the MurCDEF family.

The protein resides in the cytoplasm. The enzyme catalyses UDP-N-acetyl-alpha-D-muramate + L-alanine + ATP = UDP-N-acetyl-alpha-D-muramoyl-L-alanine + ADP + phosphate + H(+). It participates in cell wall biogenesis; peptidoglycan biosynthesis. Cell wall formation. The polypeptide is UDP-N-acetylmuramate--L-alanine ligase (Sorangium cellulosum (strain So ce56) (Polyangium cellulosum (strain So ce56))).